Consider the following 367-residue polypeptide: Heme A synthase 2 (367 aa).

Transmembrane regions (helical) follow at residues 28-48 (MVAIWLFVSFALIVEMFGIGA), 114-134 (MWGRLLGFDFGVPLVWFLWTG), 143-163 (WLVTLFVLGGVQGLIGWWMVA), 180-200 (VHYCFATLLAIAVFATALTVL), and 221-241 (MAMGSIVLISIAIVAGTFLSG). Heme is bound at residue histidine 284. The next 3 membrane-spanning stretches (helical) occupy residues 286–306 (LLGTVAAVGVLAAVVAAIRAD), 314–334 (AFLVMGALLIVQYILGVTTLV), and 340–360 (IGIVHQLNAVLLLAAAVWAWF). Histidine 344 is a heme binding site.

The protein belongs to the COX15/CtaA family. Type 2 subfamily. As to quaternary structure, interacts with CtaB. Requires heme b as cofactor.

Its subcellular location is the cell membrane. It catalyses the reaction Fe(II)-heme o + 2 A + H2O = Fe(II)-heme a + 2 AH2. The protein operates within porphyrin-containing compound metabolism; heme A biosynthesis; heme A from heme O: step 1/1. Functionally, catalyzes the conversion of heme O to heme A by two successive hydroxylations of the methyl group at C8. The first hydroxylation forms heme I, the second hydroxylation results in an unstable dihydroxymethyl group, which spontaneously dehydrates, resulting in the formyl group of heme A. This Acidiphilium cryptum (strain JF-5) protein is Heme A synthase 2.